A 684-amino-acid polypeptide reads, in one-letter code: Zinc finger BED domain-containing protein RICESLEEPER 4 (684 aa).

A BED-type zinc finger spans residues 54-113; sequence KRKSAIWEHFTLVDVSDGCKRASCIHCNQSLAYSSGSKNSGTSHLTRHIAEWCRVLKDRQ. Zn(2+) contacts are provided by Cys77, Cys80, His101, and Cys106. The interval 595-680 is HATC (Hobo-Ac-Tam3) domain; it reads ELELYLEEAL…EALLCAKDWL (86 aa).

Homodimer.

The protein resides in the nucleus. Functionally, transposase-like protein that is essential for plant growth and development. May regulate global gene expression by recruiting other cellular factors. The sequence is that of Zinc finger BED domain-containing protein RICESLEEPER 4 from Oryza sativa subsp. japonica (Rice).